An 890-amino-acid chain; its full sequence is Nitrate reductase [NADH] 2 (890 aa).

Mo-molybdopterin is bound at residue cysteine 165. The Cytochrome b5 heme-binding domain maps to 513 to 588; sequence SKMFSVSEVK…LEDYRIGELI (76 aa). Residues histidine 548 and histidine 571 each coordinate heme. One can recognise an FAD-binding FR-type domain in the interval 634–746; sequence RQKIPCKLVS…KGPLGHIEYT (113 aa). FAD-binding positions include 686-689, 703-707, phenylalanine 708, phenylalanine 715, 720-722, and threonine 773; these read RAYT, LIKVY, and LMS.

Belongs to the nitrate reductase family. As to quaternary structure, homodimer. It depends on FAD as a cofactor. Heme serves as cofactor. Mo-molybdopterin is required as a cofactor.

It catalyses the reaction nitrite + NAD(+) + H2O = nitrate + NADH + H(+). In terms of biological role, nitrate reductase is a key enzyme involved in the first step of nitrate assimilation in plants, fungi and bacteria. The polypeptide is Nitrate reductase [NADH] 2 (NIA2) (Phaseolus vulgaris (Kidney bean)).